A 221-amino-acid polypeptide reads, in one-letter code: Nuclear phosphoprotein UL3 homolog (221 aa).

This sequence belongs to the alphaherpesvirinae HHV-1 UL3 family. Phosphorylated.

It localises to the host nucleus. The sequence is that of Nuclear phosphoprotein UL3 homolog from Varicella-zoster virus (strain Dumas) (HHV-3).